The chain runs to 179 residues: Transcriptional repressor NrdR (179 aa).

A zinc finger spans residues 3–34 (CPYCQHTNSRVLESRSSEGGQSIRRRRECLCC). The region spanning 49 to 139 (ITVIKHDGKK…VYGRFQGIKD (91 aa)) is the ATP-cone domain. The interval 160–179 (KPANDDFSEQETPSTVMMPS) is disordered. The segment covering 169-179 (QETPSTVMMPS) has biased composition (polar residues).

This sequence belongs to the NrdR family. Zn(2+) is required as a cofactor.

Functionally, negatively regulates transcription of bacterial ribonucleotide reductase nrd genes and operons by binding to NrdR-boxes. The chain is Transcriptional repressor NrdR from Rippkaea orientalis (strain PCC 8801 / RF-1) (Cyanothece sp. (strain PCC 8801)).